Here is a 349-residue protein sequence, read N- to C-terminus: UDP-N-acetylenolpyruvoylglucosamine reductase (349 aa).

The region spanning 24–197 (FGIDATARFA…VAVTFRLPKR (174 aa)) is the FAD-binding PCMH-type domain. The active site involves R173. S249 (proton donor) is an active-site residue. Residue E345 is part of the active site.

Belongs to the MurB family. The cofactor is FAD.

The protein localises to the cytoplasm. It carries out the reaction UDP-N-acetyl-alpha-D-muramate + NADP(+) = UDP-N-acetyl-3-O-(1-carboxyvinyl)-alpha-D-glucosamine + NADPH + H(+). It participates in cell wall biogenesis; peptidoglycan biosynthesis. In terms of biological role, cell wall formation. This is UDP-N-acetylenolpyruvoylglucosamine reductase from Burkholderia ambifaria (strain ATCC BAA-244 / DSM 16087 / CCUG 44356 / LMG 19182 / AMMD) (Burkholderia cepacia (strain AMMD)).